The chain runs to 130 residues: Secreted RxLR effector protein 66 (130 aa).

An N-terminal signal peptide occupies residues 1–21; the sequence is MHLRLLMSTVITATLIVSNNA. A RxLR-dEER motif is present at residues 32-62; that stretch reads RALRGASTVGIAADNLLAAHFSPTLKHKESR. A helical transmembrane segment spans residues 104-124; the sequence is GPAIAIFAGVAATFILIDYLI.

Belongs to the RxLR effector family.

The protein localises to the secreted. Its subcellular location is the host cytoplasm. It is found in the host nucleus. The protein resides in the membrane. In terms of biological role, effector that acts as a broad suppressor of cell death to interrupt plant immunity. Inhibits cell death induced by cell death-inducing proteins, including the PAMP elicitor INF1 from P.infestans. This chain is Secreted RxLR effector protein 66, found in Plasmopara viticola (Downy mildew of grapevine).